Consider the following 254-residue polypeptide: Tumor necrosis factor ligand superfamily member 9 (254 aa).

The Cytoplasmic segment spans residues 1–28 (MEYASDASLDPEAPWPPAPRARACRVLP). Residues 29–49 (WALVAGLLLLLLLAAACAVFL) traverse the membrane as a helical; Signal-anchor for type II membrane protein segment. Topologically, residues 50–254 (ACPWAVSGAR…PAGLPSPRSE (205 aa)) are extracellular. The THD domain occupies 91–240 (MFAQLVAQNV…GATVLGLFRV (150 aa)).

Belongs to the tumor necrosis factor family. In terms of assembly, homotrimer. In terms of tissue distribution, expressed in brain, placenta, lung, skeletal muscle and kidney.

It localises to the membrane. In terms of biological role, cytokine that binds to TNFRSF9. Induces the proliferation of activated peripheral blood T-cells. May have a role in activation-induced cell death (AICD). May play a role in cognate interactions between T-cells and B-cells/macrophages. In Homo sapiens (Human), this protein is Tumor necrosis factor ligand superfamily member 9 (TNFSF9).